Reading from the N-terminus, the 312-residue chain is Protein-methionine-sulfoxide reductase catalytic subunit MsrP (312 aa).

The segment at residues 1-45 is a signal peptide (tat-type signal); the sequence is MPVYRPPRIAASEITPERFFLDRRSFLAAAGGLVLGGTGMAHAAA. Mo-molybdopterin-binding positions include Asn-69, 72 to 73, Cys-126, Thr-161, Asn-211, Arg-216, and 227 to 229; these read YE and GIK.

This sequence belongs to the MsrP family. As to quaternary structure, heterodimer of a catalytic subunit (MsrP) and a heme-binding subunit (MsrQ). Mo-molybdopterin serves as cofactor. In terms of processing, predicted to be exported by the Tat system. The position of the signal peptide cleavage has not been experimentally proven.

Its subcellular location is the periplasm. The enzyme catalyses L-methionyl-[protein] + a quinone + H2O = L-methionyl-(S)-S-oxide-[protein] + a quinol. It catalyses the reaction L-methionyl-[protein] + a quinone + H2O = L-methionyl-(R)-S-oxide-[protein] + a quinol. Part of the MsrPQ system that repairs oxidized periplasmic proteins containing methionine sulfoxide residues (Met-O), using respiratory chain electrons. Thus protects these proteins from oxidative-stress damage caused by reactive species of oxygen and chlorine generated by the host defense mechanisms. MsrPQ is essential for the maintenance of envelope integrity under bleach stress, rescuing a wide series of structurally unrelated periplasmic proteins from methionine oxidation. The catalytic subunit MsrP is non-stereospecific, being able to reduce both (R-) and (S-) diastereoisomers of methionine sulfoxide. The polypeptide is Protein-methionine-sulfoxide reductase catalytic subunit MsrP (Sinorhizobium fredii (strain NBRC 101917 / NGR234)).